A 444-amino-acid polypeptide reads, in one-letter code: tRNA pseudouridine synthase Pus10 (444 aa).

The active-site Nucleophile is the D265. Substrate-binding residues include Y333 and Y405.

This sequence belongs to the pseudouridine synthase Pus10 family.

It catalyses the reaction uridine(54) in tRNA = pseudouridine(54) in tRNA. The catalysed reaction is uridine(55) in tRNA = pseudouridine(55) in tRNA. In terms of biological role, responsible for synthesis of pseudouridine from uracil-54 and uracil-55 in the psi GC loop of transfer RNAs. In Thermofilum pendens (strain DSM 2475 / Hrk 5), this protein is tRNA pseudouridine synthase Pus10.